The sequence spans 171 residues: MTRLHAFNREQLLASARGELFGTAAGRLPNDPMLMFDRITDIREDGGPHGKGMVRAELDIRPDLWFFGCHFIGDPVMPGCLGLDAMWQLTGFFLTWLGAPGKGRALGCGEVKFTGQVLPEAKLVRYEIDISRVINRKLVMAQSDARMYVDDREIYSARDLRVGLFTETGSF.

H70 is an active-site residue.

Belongs to the thioester dehydratase family. FabA subfamily. In terms of assembly, homodimer.

Its subcellular location is the cytoplasm. It carries out the reaction a (3R)-hydroxyacyl-[ACP] = a (2E)-enoyl-[ACP] + H2O. The enzyme catalyses (3R)-hydroxydecanoyl-[ACP] = (2E)-decenoyl-[ACP] + H2O. The catalysed reaction is (2E)-decenoyl-[ACP] = (3Z)-decenoyl-[ACP]. It functions in the pathway lipid metabolism; fatty acid biosynthesis. Its function is as follows. Necessary for the introduction of cis unsaturation into fatty acids. Catalyzes the dehydration of (3R)-3-hydroxydecanoyl-ACP to E-(2)-decenoyl-ACP and then its isomerization to Z-(3)-decenoyl-ACP. Can catalyze the dehydratase reaction for beta-hydroxyacyl-ACPs with saturated chain lengths up to 16:0, being most active on intermediate chain length. In Stenotrophomonas maltophilia (strain K279a), this protein is 3-hydroxydecanoyl-[acyl-carrier-protein] dehydratase.